Consider the following 391-residue polypeptide: Casein kinase II subunit alpha (391 aa).

Residues 36 to 41 (QDDYQL) form an interaction with beta subunit region. Positions 39 to 324 (YQLVRKLGRG…AREAMEHPYF (286 aa)) constitute a Protein kinase domain. Residues 45–53 (LGRGKYSEV) and K68 contribute to the ATP site. D156 (proton acceptor) is an active-site residue. A phosphothreonine; by CDK1 mark is found at T344 and T360. S362 and S370 each carry phosphoserine; by CDK1.

The protein belongs to the protein kinase superfamily. Ser/Thr protein kinase family. CK2 subfamily. Heterotetramer composed of two catalytic subunits (alpha chain and/or alpha' chain) and two regulatory subunits (beta chains). The tetramer can exist as a combination of 2 alpha/2 beta, 2 alpha'/2 beta or 1 alpha/1 alpha'/2 beta subunits. Also part of a CK2-SPT16-SSRP1 complex composed of SSRP1, SUPT16H, CSNK2A1, CSNK2A2 and CSNK2B, which forms following UV irradiation. Interacts with RNPS1. Interacts with SNAI1. Interacts with PML. Interacts with CCAR2. Interacts with HIRIP3. In terms of processing, phosphorylated at Thr-344, Thr-360, Ser-362 and Ser-370 by CDK1 in prophase and metaphase and dephosphorylated during anaphase. Phosphorylation does not directly affect casein kinase 2 activity, but may contribute to its regulation by forming binding sites for interacting proteins and/or targeting it to different compartments.

It is found in the nucleus. The catalysed reaction is L-seryl-[protein] + ATP = O-phospho-L-seryl-[protein] + ADP + H(+). It catalyses the reaction L-threonyl-[protein] + ATP = O-phospho-L-threonyl-[protein] + ADP + H(+). With respect to regulation, constitutively active protein kinase whose activity is not directly affected by phosphorylation. Seems to be regulated by level of expression and localization. Functionally, catalytic subunit of a constitutively active serine/threonine-protein kinase complex that phosphorylates a large number of substrates containing acidic residues C-terminal to the phosphorylated serine or threonine. Regulates numerous cellular processes, such as cell cycle progression, apoptosis and transcription, as well as viral infection. May act as a regulatory node which integrates and coordinates numerous signals leading to an appropriate cellular response. During mitosis, functions as a component of the p53/TP53-dependent spindle assembly checkpoint (SAC) that maintains cyclin-B-CDK1 activity and G2 arrest in response to spindle damage. Also required for p53/TP53-mediated apoptosis, phosphorylating 'Ser-392' of p53/TP53 following UV irradiation. Phosphorylates a number of DNA repair proteins in response to DNA damage, such as MDC1, MRE11, RAD9A, RAD51 and HTATSF1, promoting their recruitment to DNA damage sites. Can also negatively regulate apoptosis. Phosphorylates the caspases CASP9 and CASP2 and the apoptotic regulator NOL3. Phosphorylation protects CASP9 from cleavage and activation by CASP8, and inhibits the dimerization of CASP2 and activation of CASP8. Phosphorylates YY1, protecting YY1 from cleavage by CASP7 during apoptosis. Regulates transcription by direct phosphorylation of RNA polymerases I, II, III and IV. Also phosphorylates and regulates numerous transcription factors including NF-kappa-B, STAT1, CREB1, IRF1, IRF2, ATF1, ATF4, SRF, MAX, JUN, FOS, MYC and MYB. Phosphorylates Hsp90 and its co-chaperones FKBP4 and CDC37, which is essential for chaperone function. Mediates sequential phosphorylation of FNIP1, promoting its gradual interaction with Hsp90, leading to activate both kinase and non-kinase client proteins of Hsp90. Regulates Wnt signaling by phosphorylating CTNNB1 and the transcription factor LEF1. Acts as an ectokinase that phosphorylates several extracellular proteins. Phosphorylates PML at 'Ser-565' and primes it for ubiquitin-mediated degradation. Plays an important role in the circadian clock function by phosphorylating BMAL1 at 'Ser-90' which is pivotal for its interaction with CLOCK and which controls CLOCK nuclear entry. Phosphorylates FMR1, promoting FMR1-dependent formation of a membraneless compartment. May phosphorylate histone H2A on 'Ser-1'. The polypeptide is Casein kinase II subunit alpha (Csnk2a1) (Rattus norvegicus (Rat)).